We begin with the raw amino-acid sequence, 226 residues long: Fibrillarin-like rRNA/tRNA 2'-O-methyltransferase (226 aa).

Residues 82–83, 100–101, 125–126, and 145–148 contribute to the S-adenosyl-L-methionine site; these read TT, EF, DA, and DVAQ.

This sequence belongs to the methyltransferase superfamily. Fibrillarin family. As to quaternary structure, interacts with nop5. Component of box C/D small ribonucleoprotein (sRNP) particles that contain rpl7ae, FlpA and nop5, plus a guide RNA.

In terms of biological role, involved in pre-rRNA and tRNA processing. Utilizes the methyl donor S-adenosyl-L-methionine to catalyze the site-specific 2'-hydroxyl methylation of ribose moieties in rRNA and tRNA. Site specificity is provided by a guide RNA that base pairs with the substrate. Methylation occurs at a characteristic distance from the sequence involved in base pairing with the guide RNA. The polypeptide is Fibrillarin-like rRNA/tRNA 2'-O-methyltransferase (Methanosarcina barkeri (strain Fusaro / DSM 804)).